A 111-amino-acid polypeptide reads, in one-letter code: Large ribosomal subunit protein uL23 (111 aa).

Belongs to the universal ribosomal protein uL23 family. As to quaternary structure, part of the 50S ribosomal subunit. Contacts protein L29, and trigger factor when it is bound to the ribosome.

In terms of biological role, one of the early assembly proteins it binds 23S rRNA. One of the proteins that surrounds the polypeptide exit tunnel on the outside of the ribosome. Forms the main docking site for trigger factor binding to the ribosome. This Chlamydia caviae (strain ATCC VR-813 / DSM 19441 / 03DC25 / GPIC) (Chlamydophila caviae) protein is Large ribosomal subunit protein uL23.